The chain runs to 486 residues: Cardiolipin synthase A (486 aa).

2 helical membrane passes run 3–23 and 38–58; these read TFYT…IASV and MAWL…YLSF. PLD phosphodiesterase domains follow at residues 219–246 and 399–426; these read MDLR…VDPR and EGGL…DMRS. Active-site residues include histidine 224, lysine 226, aspartate 231, histidine 404, lysine 406, and aspartate 411.

This sequence belongs to the phospholipase D family. Cardiolipin synthase subfamily. ClsA sub-subfamily.

Its subcellular location is the cell inner membrane. The catalysed reaction is 2 a 1,2-diacyl-sn-glycero-3-phospho-(1'-sn-glycerol) = a cardiolipin + glycerol. Catalyzes the reversible phosphatidyl group transfer from one phosphatidylglycerol molecule to another to form cardiolipin (CL) (diphosphatidylglycerol) and glycerol. This chain is Cardiolipin synthase A, found in Edwardsiella ictaluri (strain 93-146).